The chain runs to 612 residues: Sulfite reductase [NADPH] hemoprotein beta-component (612 aa).

A disordered region spans residues 1-26 (MDDHKPIETPDGPAVDTPGIGARRYE). [4Fe-4S] cluster contacts are provided by Cys469, Cys475, Cys514, and Cys518. Residue Cys518 participates in siroheme binding.

It belongs to the nitrite and sulfite reductase 4Fe-4S domain family. In terms of assembly, alpha(8)-beta(8). The alpha component is a flavoprotein, the beta component is a hemoprotein. Siroheme is required as a cofactor. [4Fe-4S] cluster serves as cofactor.

It catalyses the reaction hydrogen sulfide + 3 NADP(+) + 3 H2O = sulfite + 3 NADPH + 4 H(+). Its pathway is sulfur metabolism; hydrogen sulfide biosynthesis; hydrogen sulfide from sulfite (NADPH route): step 1/1. In terms of biological role, component of the sulfite reductase complex that catalyzes the 6-electron reduction of sulfite to sulfide. This is one of several activities required for the biosynthesis of L-cysteine from sulfate. This Methylorubrum extorquens (strain ATCC 14718 / DSM 1338 / JCM 2805 / NCIMB 9133 / AM1) (Methylobacterium extorquens) protein is Sulfite reductase [NADPH] hemoprotein beta-component.